Here is a 359-residue protein sequence, read N- to C-terminus: F-box protein At1g10895 (359 aa).

One can recognise an F-box domain in the interval 2–48 (TTMSDLDEIMVAEILCRTPMTCLKTVRSVCKKWNALSKKWFFFGKAK).

This Arabidopsis thaliana (Mouse-ear cress) protein is F-box protein At1g10895.